The following is a 157-amino-acid chain: 6,7-dimethyl-8-ribityllumazine synthase (157 aa).

Residues phenylalanine 22, 56-58, and 80-82 contribute to the 5-amino-6-(D-ribitylamino)uracil site; these read AME and AVV. Residue 85–86 participates in (2S)-2-hydroxy-3-oxobutyl phosphate binding; that stretch reads ET. Histidine 88 serves as the catalytic Proton donor. Phenylalanine 113 contributes to the 5-amino-6-(D-ribitylamino)uracil binding site. Arginine 127 is a binding site for (2S)-2-hydroxy-3-oxobutyl phosphate.

The protein belongs to the DMRL synthase family.

The catalysed reaction is (2S)-2-hydroxy-3-oxobutyl phosphate + 5-amino-6-(D-ribitylamino)uracil = 6,7-dimethyl-8-(1-D-ribityl)lumazine + phosphate + 2 H2O + H(+). It functions in the pathway cofactor biosynthesis; riboflavin biosynthesis; riboflavin from 2-hydroxy-3-oxobutyl phosphate and 5-amino-6-(D-ribitylamino)uracil: step 1/2. Its function is as follows. Catalyzes the formation of 6,7-dimethyl-8-ribityllumazine by condensation of 5-amino-6-(D-ribitylamino)uracil with 3,4-dihydroxy-2-butanone 4-phosphate. This is the penultimate step in the biosynthesis of riboflavin. In Levilactobacillus brevis (strain ATCC 367 / BCRC 12310 / CIP 105137 / JCM 1170 / LMG 11437 / NCIMB 947 / NCTC 947) (Lactobacillus brevis), this protein is 6,7-dimethyl-8-ribityllumazine synthase.